The chain runs to 432 residues: Adenylosuccinate synthetase (432 aa).

Residues 13–19 and 41–43 contribute to the GTP site; these read GDEGKGK and GHT. Asp-14 acts as the Proton acceptor in catalysis. 2 residues coordinate Mg(2+): Asp-14 and Gly-41. Residues 14–17, 39–42, Thr-130, Arg-144, Gln-225, Thr-240, and Arg-304 contribute to the IMP site; these read DEGK and NAGH. Residue His-42 is the Proton donor of the active site. 300–306 serves as a coordination point for substrate; sequence ATTGRKR. Residues Arg-306, 332–334, and 415–417 each bind GTP; these read KLD and STG.

This sequence belongs to the adenylosuccinate synthetase family. In terms of assembly, homodimer. Mg(2+) is required as a cofactor.

It is found in the cytoplasm. It carries out the reaction IMP + L-aspartate + GTP = N(6)-(1,2-dicarboxyethyl)-AMP + GDP + phosphate + 2 H(+). Its pathway is purine metabolism; AMP biosynthesis via de novo pathway; AMP from IMP: step 1/2. In terms of biological role, plays an important role in the de novo pathway of purine nucleotide biosynthesis. Catalyzes the first committed step in the biosynthesis of AMP from IMP. The sequence is that of Adenylosuccinate synthetase from Pseudoalteromonas atlantica (strain T6c / ATCC BAA-1087).